We begin with the raw amino-acid sequence, 163 residues long: Phosphopantetheine adenylyltransferase (163 aa).

Substrate is bound at residue serine 9. Residues 9–10 (SF) and histidine 17 each bind ATP. Substrate-binding residues include lysine 41, isoleucine 75, and arginine 89. Residues 90–92 (GIR), glutamate 100, and 125–131 (HLYVRSD) contribute to the ATP site.

The protein belongs to the bacterial CoaD family. As to quaternary structure, homohexamer. The cofactor is Mg(2+).

It is found in the cytoplasm. It carries out the reaction (R)-4'-phosphopantetheine + ATP + H(+) = 3'-dephospho-CoA + diphosphate. The protein operates within cofactor biosynthesis; coenzyme A biosynthesis; CoA from (R)-pantothenate: step 4/5. In terms of biological role, reversibly transfers an adenylyl group from ATP to 4'-phosphopantetheine, yielding dephospho-CoA (dPCoA) and pyrophosphate. This Borrelia garinii subsp. bavariensis (strain ATCC BAA-2496 / DSM 23469 / PBi) (Borreliella bavariensis) protein is Phosphopantetheine adenylyltransferase.